The following is a 1173-amino-acid chain: AT-rich interactive domain-containing protein 5B (1173 aa).

Lys-130 participates in a covalent cross-link: Glycyl lysine isopeptide (Lys-Gly) (interchain with G-Cter in SUMO2). The segment at 249-283 (PNLKGRPRKKKPCPQRRDSFSGGKDPNNNSDGKSV) is disordered. Residues 253 to 262 (GRPRKKKPCP) show a composition bias toward basic residues. Ser-267 is modified (phosphoserine). An ARID domain is found at 322 to 414 (RADEQAFLVA…LILPYERFIK (93 aa)). Lys-340 carries the N6,N6-dimethyllysine modification. The tract at residues 416 to 607 (EEDKPLPPIK…QPPLANQSEV (192 aa)) is disordered. Lys-449 is covalently cross-linked (Glycyl lysine isopeptide (Lys-Gly) (interchain with G-Cter in SUMO2)). The segment covering 450-462 (HEISKSKKEKENA) has biased composition (basic and acidic residues). Glycyl lysine isopeptide (Lys-Gly) (interchain with G-Cter in SUMO2) cross-links involve residues Lys-497 and Lys-499. Residues 547 to 557 (SAPLAPTPGTG) are compositionally biased toward low complexity. Residues 593-605 (GFSTTQPPLANQS) show a composition bias toward polar residues. Residues Lys-763 and Lys-769 each participate in a glycyl lysine isopeptide (Lys-Gly) (interchain with G-Cter in SUMO2) cross-link. Disordered regions lie at residues 777-802 (EPRFSFSKHHLSPSKKSRGRRTVEKR), 877-924 (KKSA…GTSQ), and 936-965 (HPKACRVSPMTMSAPKKYPEALSRSGKPHP). The segment covering 782–796 (FSKHHLSPSKKSRGR) has biased composition (basic residues). Glycyl lysine isopeptide (Lys-Gly) (interchain with G-Cter in SUMO2) cross-links involve residues Lys-878, Lys-901, Lys-905, and Lys-920. Glycyl lysine isopeptide (Lys-Gly) (interchain with G-Cter in SUMO2) cross-links involve residues Lys-973, Lys-985, and Lys-998. Ser-1017 carries the phosphoserine modification. Positions 1017–1055 (SPLDPAKEVSGKEKASEQESEGSKAAHSGHSGGTSEGHK) are disordered. Basic and acidic residues predominate over residues 1021-1040 (PAKEVSGKEKASEQESEGSK). Residues Lys-1040 and Lys-1055 each participate in a glycyl lysine isopeptide (Lys-Gly) (interchain with G-Cter in SUMO2) cross-link. Ser-1118 is subject to Phosphoserine.

Belongs to the ARID5B family. Methylation at Lys-340 prevents DNA-binding. Demethylation by PHF2 promotes recruitment of the PHF2-ARID5B complex to promoters.

The protein resides in the nucleus. Its function is as follows. Transcription coactivator that binds to the 5'-AATA[CT]-3' core sequence and plays a key role in adipogenesis and liver development. Acts by forming a complex with phosphorylated PHF2, which mediates demethylation at Lys-340, leading to target the PHF2-ARID5B complex to target promoters, where PHF2 mediates demethylation of dimethylated 'Lys-9' of histone H3 (H3K9me2), followed by transcription activation of target genes. The PHF2-ARID5B complex acts as a coactivator of HNF4A in liver. Required for adipogenesis: regulates triglyceride metabolism in adipocytes by regulating expression of adipogenic genes. Overexpression leads to induction of smooth muscle marker genes, suggesting that it may also act as a regulator of smooth muscle cell differentiation and proliferation. This chain is AT-rich interactive domain-containing protein 5B (ARID5B), found in Bos taurus (Bovine).